A 472-amino-acid chain; its full sequence is Sulfate adenylyltransferase subunit 1 (472 aa).

The 218-residue stretch at 22–239 (KELLRFLTCG…TVPIAGDKNY (218 aa)) folds into the tr-type G domain. Residues 31-38 (GSVDDGKS) are G1. 31-38 (GSVDDGKS) serves as a coordination point for GTP. Positions 89 to 93 (GITID) are G2. A G3 region spans residues 110 to 113 (DTPG). Residues 110–114 (DTPGH) and 165–168 (NKMD) contribute to the GTP site. The interval 165–168 (NKMD) is G4. The tract at residues 202–204 (SAL) is G5.

The protein belongs to the TRAFAC class translation factor GTPase superfamily. Classic translation factor GTPase family. CysN/NodQ subfamily. In terms of assembly, heterodimer composed of CysD, the smaller subunit, and CysN.

The catalysed reaction is sulfate + ATP + H(+) = adenosine 5'-phosphosulfate + diphosphate. It participates in sulfur metabolism; hydrogen sulfide biosynthesis; sulfite from sulfate: step 1/3. In terms of biological role, with CysD forms the ATP sulfurylase (ATPS) that catalyzes the adenylation of sulfate producing adenosine 5'-phosphosulfate (APS) and diphosphate, the first enzymatic step in sulfur assimilation pathway. APS synthesis involves the formation of a high-energy phosphoric-sulfuric acid anhydride bond driven by GTP hydrolysis by CysN coupled to ATP hydrolysis by CysD. The chain is Sulfate adenylyltransferase subunit 1 from Cellvibrio japonicus (strain Ueda107) (Pseudomonas fluorescens subsp. cellulosa).